Consider the following 63-residue polypeptide: Putative conjugal transfer lipoprotein XF_a0011.1 (63 aa).

An N-terminal signal peptide occupies residues 1–15 (MRYTFGIVTVYLLAG). A lipid anchor (N-palmitoyl cysteine) is attached at cysteine 16. A lipid anchor (S-diacylglycerol cysteine) is attached at cysteine 16.

It to B.suis ORF12 in VirB region.

It localises to the cell inner membrane. The polypeptide is Putative conjugal transfer lipoprotein XF_a0011.1 (Xylella fastidiosa (strain 9a5c)).